Reading from the N-terminus, the 493-residue chain is MLPYMDQVLRAFYQSTHWSTQNSYEDITATSRTLLDFRIPSAIHLQISNKSTPNTFNSLDFSTRSRINGSLSYLYSDAQQLEKFMRNSTDIPLQDATETYRQLQPNLNYSVSSGNTLSSDNTTVDNDKKLLHDSKFVKKSLYYGRMYYPSSDLEAMIIKRLSPQTQFMLKGVSSFKESLNVLTCYFQRDSHRNLQEWIFSTSDLLCGYRVLHNFLTTPSKFNTSLYNNSSLSLGAEFWLGLVSLSPGCSTTLRYYTHSTNTGRPLTLTLSWNPLFGHISSTYSAKTGTNSTFCAKYDFNLYSIESNLSFGCEFWQKKHHLLETNKNNNDKLEPISDELVDINPNSRATKLLHENVPDLNSAVNDIPSTLDIPVHKQKLLNDLTYAFSSSLRKIDEERSTIEKFDNKINSSIFTSVWKLSTSLRDKTLKLLWEGKWRGFLISAGTELVFTRGFQESLSDDEKNDNAISISATDTENGNIPVFPAKFGIQFQYST.

This sequence belongs to the MDM10 family. In terms of assembly, component of the ER-mitochondria encounter structure (ERMES) or MDM complex, composed of MMM1, MDM10, MDM12 and MDM34. Associates with the mitochondrial outer membrane sorting assembly machinery SAM(core) complex, which consists of SAM35, SAM37 and SAM50, to form a SAM(holo) complex.

It is found in the mitochondrion outer membrane. Functionally, component of the ERMES/MDM complex, which serves as a molecular tether to connect the endoplasmic reticulum and mitochondria. Components of this complex are involved in the control of mitochondrial shape and protein biogenesis and may function in phospholipid exchange. MDM10 is involved in the late assembly steps of the general translocase of the mitochondrial outer membrane (TOM complex). Functions in the TOM40-specific route of the assembly of outer membrane beta-barrel proteins, including the association of TOM40 with the receptor TOM22 and small TOM proteins. Can associate with the SAM(core) complex as well as the MDM12-MMM1 complex, both involved in late steps of the major beta-barrel assembly pathway, that is responsible for biogenesis of all outer membrane beta-barrel proteins. May act as a switch that shuttles between both complexes and channels precursor proteins into the TOM40-specific pathway. Plays a role in mitochondrial morphology and in the inheritance of mitochondria. This chain is Mitochondrial distribution and morphology protein 10, found in Saccharomyces cerevisiae (strain YJM789) (Baker's yeast).